We begin with the raw amino-acid sequence, 255 residues long: MEFVQYACNGAVAEIILNRPDAHHALNEQMLSELKEAVEMAAASEALIVLLRGSGKGFSAGGDIRMMTSEHDPDQFKRLMDTIEAVTLNLYQMKKVTIAAIHGAAAGLGLSLALCADIVLAEKNAVLAMNFIGIGLVPDGGGHYLLKKRIGEAKAKKLIWSGKKLSASEAADMGLLDGTFAGDPAEGARPIIETLLASPLLAMIETKGIFQSLQIEELKKVLSLERSAQERMRRTKDHQEGIRAFLEKREPKFQA.

The next 2 helical transmembrane spans lie at 96–116 and 126–146; these read VTIA…ALCA and VLAM…HYLL.

This sequence belongs to the enoyl-CoA hydratase/isomerase family.

The protein resides in the cell membrane. This chain is Putative enoyl-CoA hydratase/isomerase YhaR (yhaR), found in Bacillus subtilis (strain 168).